The primary structure comprises 643 residues: Protein cueball (643 aa).

The first 21 residues, 1-21 (MMIWVPALIFLSACLLPRSNG), serve as a signal peptide directing secretion. Residues 22–530 (TPLEWDFAVT…VCQTPFVWTS (509 aa)) are Extracellular-facing. N-linked (GlcNAc...) asparagine glycosylation is found at N77 and N103. 3 LDL-receptor class B repeats span residues 116–163 (RNLF…DICR), 164–208 (RKLY…DQLS), and 209–254 (DRLF…TNDA). A glycan (N-linked (GlcNAc...) asparagine) is linked at N172. The span at 276 to 290 (ATTTVRPEVESSTDG) shows a compositional bias: polar residues. Residues 276 to 303 (ATTTVRPEVESSTDGTESESKQESEPVE) form a disordered region. Residue N312 is glycosylated (N-linked (GlcNAc...) asparagine). 3 consecutive EGF-like domains span residues 363 to 397 (RMDQLERDHCMNGGSYISKRDLCICPAGFKGSRCE), 398 to 429 (IRECHNYCVHGTCQMSDLAYPKCYCQPGFTGE), and 432 to 470 (EVSNCAGLCLNGGHCRLGETEKDQPSCECPANFAGERCE). 7 cysteine pairs are disulfide-bonded: C372–C385, C387–C396, C401–C410, C405–C420, C436–C446, C440–C458, and C460–C469. 2 N-linked (GlcNAc...) asparagine glycosylation sites follow: N472 and N507. Residues 531–551 (SVIIILVVGIVFSLLLITTII) traverse the membrane as a helical segment. The Cytoplasmic segment spans residues 552 to 643 (HGIRRLYKPK…LIHNMEDDLY (92 aa)).

Belongs to the cueball family.

It is found in the cell membrane. In terms of biological role, has a role in spermatogenesis and oogenesis. The sequence is that of Protein cueball from Drosophila ananassae (Fruit fly).